We begin with the raw amino-acid sequence, 208 residues long: Large ribosomal subunit protein bL25 (208 aa).

Belongs to the bacterial ribosomal protein bL25 family. CTC subfamily. Part of the 50S ribosomal subunit; part of the 5S rRNA/L5/L18/L25 subcomplex. Contacts the 5S rRNA. Binds to the 5S rRNA independently of L5 and L18.

Its function is as follows. This is one of the proteins that binds to the 5S RNA in the ribosome where it forms part of the central protuberance. This chain is Large ribosomal subunit protein bL25, found in Phenylobacterium zucineum (strain HLK1).